We begin with the raw amino-acid sequence, 84 residues long: Exodeoxyribonuclease 7 small subunit (84 aa).

Belongs to the XseB family. Heterooligomer composed of large and small subunits.

It localises to the cytoplasm. The catalysed reaction is Exonucleolytic cleavage in either 5'- to 3'- or 3'- to 5'-direction to yield nucleoside 5'-phosphates.. Functionally, bidirectionally degrades single-stranded DNA into large acid-insoluble oligonucleotides, which are then degraded further into small acid-soluble oligonucleotides. In Azoarcus sp. (strain BH72), this protein is Exodeoxyribonuclease 7 small subunit.